A 396-amino-acid chain; its full sequence is Ribosomal RNA large subunit methyltransferase I (396 aa).

One can recognise a PUA domain in the interval 2-81; that stretch reads SVRLVLAKGR…ESIDIAFFTR (80 aa).

The protein belongs to the methyltransferase superfamily. RlmI family.

It is found in the cytoplasm. It carries out the reaction cytidine(1962) in 23S rRNA + S-adenosyl-L-methionine = 5-methylcytidine(1962) in 23S rRNA + S-adenosyl-L-homocysteine + H(+). In terms of biological role, specifically methylates the cytosine at position 1962 (m5C1962) of 23S rRNA. This Escherichia coli (strain SMS-3-5 / SECEC) protein is Ribosomal RNA large subunit methyltransferase I.